Consider the following 82-residue polypeptide: Sec-independent protein translocase protein TatA (82 aa).

The helical transmembrane segment at Met1–Gly21 threads the bilayer.

Belongs to the TatA/E family. The Tat system comprises two distinct complexes: a TatABC complex, containing multiple copies of TatA, TatB and TatC subunits, and a separate TatA complex, containing only TatA subunits. Substrates initially bind to the TatABC complex, which probably triggers association of the separate TatA complex to form the active translocon.

The protein resides in the cell inner membrane. Its function is as follows. Part of the twin-arginine translocation (Tat) system that transports large folded proteins containing a characteristic twin-arginine motif in their signal peptide across membranes. TatA could form the protein-conducting channel of the Tat system. The protein is Sec-independent protein translocase protein TatA of Vibrio cholerae serotype O1 (strain ATCC 39315 / El Tor Inaba N16961).